Consider the following 69-residue polypeptide: Large ribosomal subunit protein bL31 (69 aa).

It belongs to the bacterial ribosomal protein bL31 family. Type A subfamily. As to quaternary structure, part of the 50S ribosomal subunit.

Binds the 23S rRNA. The chain is Large ribosomal subunit protein bL31 from Magnetococcus marinus (strain ATCC BAA-1437 / JCM 17883 / MC-1).